A 389-amino-acid polypeptide reads, in one-letter code: S-adenosylmethionine synthase (389 aa).

Residue histidine 17 coordinates ATP. Aspartate 19 contacts Mg(2+). Glutamate 45 provides a ligand contact to K(+). 2 residues coordinate L-methionine: glutamate 58 and glutamine 101. The interval 101–111 is flexible loop; that stretch reads QSPDISQGVTE. Residues 168–170, 234–235, aspartate 243, 249–250, alanine 266, and lysine 270 contribute to the ATP site; these read DSK, RF, and RK. L-methionine is bound at residue aspartate 243. Lysine 274 lines the L-methionine pocket.

The protein belongs to the AdoMet synthase family. In terms of assembly, homotetramer; dimer of dimers. Requires Mg(2+) as cofactor. It depends on K(+) as a cofactor.

The protein localises to the cytoplasm. It carries out the reaction L-methionine + ATP + H2O = S-adenosyl-L-methionine + phosphate + diphosphate. It participates in amino-acid biosynthesis; S-adenosyl-L-methionine biosynthesis; S-adenosyl-L-methionine from L-methionine: step 1/1. Functionally, catalyzes the formation of S-adenosylmethionine (AdoMet) from methionine and ATP. The overall synthetic reaction is composed of two sequential steps, AdoMet formation and the subsequent tripolyphosphate hydrolysis which occurs prior to release of AdoMet from the enzyme. This Geobacter metallireducens (strain ATCC 53774 / DSM 7210 / GS-15) protein is S-adenosylmethionine synthase.